The chain runs to 1803 residues: 6-methylsalicylic acid synthase (1803 aa).

Residues 1-40 (MEVHGDEVLSVDSGVSTPPSTGSGFRRPLETPGTEIGNLN) form a disordered region. A compositionally biased stretch (low complexity) spans 13–24 (SGVSTPPSTGSG). Positions 44-470 (QNEVAVVGMA…GTVSHAIIEE (427 aa)) constitute a Ketosynthase family 3 (KS3) domain. Active-site for beta-ketoacyl synthase activity residues include C216, H351, and H391. Residues 581-894 (VWVFSGHGAQ…SIAQLHCRGA (314 aa)) enclose the Malonyl-CoA:ACP transacylase (MAT) domain. S667 serves as the catalytic For malonyltransferase activity. Residues 940–1058 (HTLLGQRVPV…GQWEAGGSKN (119 aa)) form an N-terminal hotdog fold region. Positions 940–1218 (HTLLGQRVPV…FSEIEGTPGS (279 aa)) constitute a PKS/mFAS DH domain. Residue H972 is the Proton acceptor; for thioesterase activity of the active site. The interval 1073–1218 (ANNKLADNFS…FSEIEGTPGS (146 aa)) is C-terminal hotdog fold. D1129 acts as the Proton donor; for thioesterase activity in catalysis. Residues 1141-1262 (TSVGSTLFFD…KNVADLYCGS (122 aa)) are required for homotetramer formation. The Ketoreductase (KR) domain maps to 1434 to 1628 (STYLITGGLG…AVAVQWTSWR (195 aa)). A compositionally biased stretch (low complexity) spans 1701 to 1710 (ASSADAPSAA). The segment at 1701–1721 (ASSADAPSAAPKETNEMPESI) is disordered. The Carrier domain occupies 1726 to 1801 (TWLDERIRDC…HLVGWFLEKM (76 aa)). The residue at position 1761 (S1761) is an O-(pantetheine 4'-phosphoryl)serine. Positions 1783–1803 (LTWSCPTVSHLVGWFLEKMGN) are required for catalytic activity.

Homotetramer.

It carries out the reaction 3 malonyl-CoA + acetyl-CoA + NADPH + 3 H(+) = 6-methylsalicylate + 3 CO2 + NADP(+) + 4 CoA + H2O. It functions in the pathway secondary metabolite biosynthesis. 6-methylsalicylic acid synthase; part of the gene cluster that mediates the biosynthesis of terreic acid, a quinone epoxide inhibitor of Bruton's tyrosine kinase. The first step of the pathway is the synthesis of 6-methylsalicylic acid (6-MSA) by the 6-methylsalicylic acid synthase atX. In the biosynthesis of 6-MSA, atX utilizes one acetyl-CoA and three malonyl-CoAs as its substrates and catalyzes a series of programmed reactions including Claisen condensation, reduction, aldol cyclization, and the hydrolytic cleavage that yields 6-MSA. The 6-methylsalicylate 1-monooxygenase atA then catalyzes the decarboxylative hydroxylation of 6-MSA to 3-methylcatechol. The next step is the conversion of 3-methylcatechol to 3-methyl-1,2,4-benzenetriol by cytochrome P450 monooxygenase atE, which is enhanced by cytochrome P450 monooxygenase atG. Then, the epoxidase atD catalyzes the epoxidation and hydroxyl oxidation of 3-methyl-1,2,4-benzenetriol to terremutin. Lastly, GMC oxidoreductase atC oxidizes terremutin to terreic acid. The sequence is that of 6-methylsalicylic acid synthase from Aspergillus terreus (strain NIH 2624 / FGSC A1156).